The sequence spans 1083 residues: Glutamate receptor-interacting protein 2 (1083 aa).

3 consecutive PDZ domains span residues 58–141, 156–244, and 258–342; these read IVEL…EYEL, TIEI…EYDV, and LVEI…LPAH. Residues 408 to 422 are compositionally biased toward polar residues; the sequence is AGTPGFSSQNSNTLP. The interval 408 to 460 is disordered; that stretch reads AGTPGFSSQNSNTLPRTVHPMSPRTTMNRRRQKRKDHKSSLSLASSTVGPGGQ. A compositionally biased stretch (basic residues) spans 434-444; that stretch reads MNRRRQKRKDH. PDZ domains follow at residues 468-555, 569-652, and 667-749; these read EIIL…EIEF, HVKL…RKDE, and TVEL…KKQT. Disordered stretches follow at residues 754–783, 853–872, and 936–965; these read PQRL…LSEI, NEQD…GLET, and GSHH…VHNA. Polar residues predominate over residues 774 to 783; that stretch reads SQKTSKLSEI. Basic and acidic residues predominate over residues 945-963; the sequence is PKKENKLSQDARSKKEEVH. One can recognise a PDZ 7 domain in the interval 974–1056; it reads KVTVQKDMDT…RLDLVISRGL (83 aa).

It belongs to the GRIP2 family. Enriched in the mitochondrial cloud of stage I oocytes, before becoming concentrated at the tip of the vegetal cortex in stage II oocytes. Expression becomes localized to the germ plasm of stage III-IV oocytes and early cleavage stages. At the tailbud stage, localizes to the migrating primordial germ cells (PGCs) until PGC migration is complete (stage 40), at which point expression disappears. In the adult, expressed in the brain, ovary, eye, muscle, spinal cord and very weakly in adipocytes.

It is found in the cytoplasm. Its function is as follows. Plays an important role in primordial germ cell (PGC) maintenance and efficiency of PGC migration. The protein is Glutamate receptor-interacting protein 2 of Xenopus laevis (African clawed frog).